The sequence spans 292 residues: N-acetylneuraminate lyase (292 aa).

Ser47 and Thr48 together coordinate aceneuramate. The active-site Proton donor is Tyr136. Lys164 (schiff-base intermediate with substrate) is an active-site residue. Aceneuramate contacts are provided by Thr166, Gly188, Asp190, Glu191, and Ser207.

This sequence belongs to the DapA family. NanA subfamily. As to quaternary structure, homotetramer.

The protein localises to the cytoplasm. It carries out the reaction aceneuramate = aldehydo-N-acetyl-D-mannosamine + pyruvate. It participates in amino-sugar metabolism; N-acetylneuraminate degradation; D-fructose 6-phosphate from N-acetylneuraminate: step 1/5. Functionally, catalyzes the reversible aldol cleavage of N-acetylneuraminic acid (sialic acid; Neu5Ac) to form pyruvate and N-acetylmannosamine (ManNAc) via a Schiff base intermediate. In Histophilus somni (strain 129Pt) (Haemophilus somnus), this protein is N-acetylneuraminate lyase.